The chain runs to 400 residues: NADH-ubiquinone oxidoreductase 49 kDa subunit (400 aa).

This sequence belongs to the complex I 49 kDa subunit family.

It localises to the mitochondrion. The catalysed reaction is a ubiquinone + NADH + 5 H(+)(in) = a ubiquinol + NAD(+) + 4 H(+)(out). In terms of biological role, core subunit of the mitochondrial membrane respiratory chain NADH dehydrogenase (Complex I) that is believed to belong to the minimal assembly required for catalysis. Complex I functions in the transfer of electrons from NADH to the respiratory chain. The immediate electron acceptor for the enzyme is believed to be ubiquinone. Component of the iron-sulfur (IP) fragment of the enzyme. Component of the iron-sulfur (IP) fragment of the enzyme. This Prototheca wickerhamii protein is NADH-ubiquinone oxidoreductase 49 kDa subunit (NAD7).